A 329-amino-acid polypeptide reads, in one-letter code: Aspartate--ammonia ligase (329 aa).

Belongs to the class-II aminoacyl-tRNA synthetase family. AsnA subfamily.

The protein resides in the cytoplasm. The catalysed reaction is L-aspartate + NH4(+) + ATP = L-asparagine + AMP + diphosphate + H(+). It functions in the pathway amino-acid biosynthesis; L-asparagine biosynthesis; L-asparagine from L-aspartate (ammonia route): step 1/1. This chain is Aspartate--ammonia ligase, found in Ureaplasma urealyticum serovar 10 (strain ATCC 33699 / Western).